The following is a 225-amino-acid chain: Biosynthetic peptidoglycan transglycosylase (225 aa).

Residues 7–27 form a helical membrane-spanning segment; that stretch reads SFLFKMVLILLIAPIVLVGVV.

This sequence belongs to the glycosyltransferase 51 family.

It is found in the cell inner membrane. It catalyses the reaction [GlcNAc-(1-&gt;4)-Mur2Ac(oyl-L-Ala-gamma-D-Glu-L-Lys-D-Ala-D-Ala)](n)-di-trans,octa-cis-undecaprenyl diphosphate + beta-D-GlcNAc-(1-&gt;4)-Mur2Ac(oyl-L-Ala-gamma-D-Glu-L-Lys-D-Ala-D-Ala)-di-trans,octa-cis-undecaprenyl diphosphate = [GlcNAc-(1-&gt;4)-Mur2Ac(oyl-L-Ala-gamma-D-Glu-L-Lys-D-Ala-D-Ala)](n+1)-di-trans,octa-cis-undecaprenyl diphosphate + di-trans,octa-cis-undecaprenyl diphosphate + H(+). It participates in cell wall biogenesis; peptidoglycan biosynthesis. In terms of biological role, peptidoglycan polymerase that catalyzes glycan chain elongation from lipid-linked precursors. The protein is Biosynthetic peptidoglycan transglycosylase of Vibrio parahaemolyticus serotype O3:K6 (strain RIMD 2210633).